The chain runs to 221 residues: Ras-related protein Rab-28 (221 aa).

Serine 2 is modified (N-acetylserine). At serine 8 the chain carries Phosphoserine. Glycine 21, glycine 24, lysine 25, threonine 26, serine 27, glycine 38, lysine 39, tyrosine 41, and threonine 44 together coordinate GTP. Threonine 26 is a Mg(2+) binding site. The tract at residues 35–49 (ETFGKQYKQTIGLDF) is switch I. Mg(2+)-binding residues include threonine 44 and aspartate 68. Residues 68–85 (DIGGQTIGGKMLDKYIYG) form a switch II region. GTP-binding residues include glycine 71, asparagine 129, lysine 130, aspartate 132, alanine 160, and lysine 161. Residue cysteine 218 is modified to Cysteine methyl ester. The S-farnesyl cysteine moiety is linked to residue cysteine 218. Residues 219-221 (AVQ) constitute a propeptide, removed in mature form.

The protein belongs to the small GTPase superfamily. Rab family. In terms of assembly, interacts (prenylated form) with PDE6D; the interaction promotes RAB28 delivery to the photoreceptor outer segments. Interacts with KCNJ13; the interaction may facilitate cone outer segments phagocytosis. Interacts with RELA; the interaction contributes to RELA transport from cytoplasm to nucleus. Mg(2+) is required as a cofactor. Isoprenylated.

The protein localises to the cell membrane. The protein resides in the cytoplasm. Its subcellular location is the cytoskeleton. It is found in the cilium basal body. It localises to the nucleus. It carries out the reaction GTP + H2O = GDP + phosphate + H(+). Its activity is regulated as follows. Regulated by guanine nucleotide exchange factors (GEFs) which promote the exchange of bound GDP for free GTP. Regulated by GTPase activating proteins (GAPs) which increase the GTP hydrolysis activity. Inhibited by GDP dissociation inhibitors (GDIs). Its function is as follows. The small GTPases Rab are key regulators of intracellular membrane trafficking, from the formation of transport vesicles to their fusion with membranes. Rabs cycle between an inactive GDP-bound form and an active GTP-bound form that is able to recruit to membranes different sets of downstream effectors directly responsible for vesicle formation, movement, tethering and fusion. RAB28 is required for shedding and phagocytosis of cone cell outer segments (OS) discs in the retina. Also participates in nuclear factor kappa-B p65/RELA nuclear transport in endothelial cells. This Bos taurus (Bovine) protein is Ras-related protein Rab-28 (RAB28).